The primary structure comprises 214 residues: Proteasome subunit beta type-6 (214 aa).

A propeptide spans 1–14 (MEAPEWLDNAVDLG) (removed in mature form). Residue T15 is the Nucleophile of the active site.

It belongs to the peptidase T1B family. The 26S proteasome consists of a 20S proteasome core and two 19S regulatory subunits. The 20S proteasome core is composed of 28 subunits that are arranged in four stacked rings, resulting in a barrel-shaped structure. The two end rings are each formed by seven alpha subunits, and the two central rings are each formed by seven beta subunits. The catalytic chamber with the active sites is on the inside of the barrel.

The protein localises to the cytoplasm. It is found in the nucleus. It carries out the reaction Cleavage of peptide bonds with very broad specificity.. Its function is as follows. The proteasome is a multicatalytic proteinase complex which is characterized by its ability to cleave peptides with Arg, Phe, Tyr, Leu, and Glu adjacent to the leaving group at neutral or slightly basic pH. The proteasome has an ATP-dependent proteolytic activity. This Dictyostelium discoideum (Social amoeba) protein is Proteasome subunit beta type-6 (psmB6).